We begin with the raw amino-acid sequence, 708 residues long: Ion-translocating oxidoreductase complex subunit C (708 aa).

2 consecutive 4Fe-4S ferredoxin-type domains span residues 369-397 (GEPQ…QQLY) and 407-436 (KATT…VQYF). [4Fe-4S] cluster-binding residues include Cys377, Cys380, Cys383, Cys387, Cys416, Cys419, Cys422, and Cys426. The segment at 663–684 (KARKLEQQQTNAEPEEQVDPRK) is disordered.

The protein belongs to the 4Fe4S bacterial-type ferredoxin family. RnfC subfamily. As to quaternary structure, the complex is composed of six subunits: RsxA, RsxB, RsxC, RsxD, RsxE and RsxG. [4Fe-4S] cluster serves as cofactor.

The protein resides in the cell inner membrane. Part of a membrane-bound complex that couples electron transfer with translocation of ions across the membrane. Required to maintain the reduced state of SoxR. The protein is Ion-translocating oxidoreductase complex subunit C of Shigella boydii serotype 18 (strain CDC 3083-94 / BS512).